The chain runs to 65 residues: Cell death protein rpr (65 aa).

In terms of assembly, interacts with Diap2 (via BIR2 domain).

Its function is as follows. Activator of apoptosis, as well as grim and hid, that acts on the effector Dredd. The protein is Cell death protein rpr (rpr) of Drosophila melanogaster (Fruit fly).